The sequence spans 97 residues: Aspartyl/glutamyl-tRNA(Asn/Gln) amidotransferase subunit C (97 aa).

The protein belongs to the GatC family. In terms of assembly, heterotrimer of A, B and C subunits.

It carries out the reaction L-glutamyl-tRNA(Gln) + L-glutamine + ATP + H2O = L-glutaminyl-tRNA(Gln) + L-glutamate + ADP + phosphate + H(+). It catalyses the reaction L-aspartyl-tRNA(Asn) + L-glutamine + ATP + H2O = L-asparaginyl-tRNA(Asn) + L-glutamate + ADP + phosphate + 2 H(+). Functionally, allows the formation of correctly charged Asn-tRNA(Asn) or Gln-tRNA(Gln) through the transamidation of misacylated Asp-tRNA(Asn) or Glu-tRNA(Gln) in organisms which lack either or both of asparaginyl-tRNA or glutaminyl-tRNA synthetases. The reaction takes place in the presence of glutamine and ATP through an activated phospho-Asp-tRNA(Asn) or phospho-Glu-tRNA(Gln). The chain is Aspartyl/glutamyl-tRNA(Asn/Gln) amidotransferase subunit C from Anaeromyxobacter dehalogenans (strain 2CP-C).